The primary structure comprises 1920 residues: rRNA biogenesis protein RRP5 (1920 aa).

The disordered stretch occupies residues M1–E65. S1 motif domains lie at G128–R210, G226–D291, G314–S384, G400–K473, G490–K557, G577–M646, G661–K733, N753–K822, G866–R930, E958–D1031, G1054–K1129, G1153–R1224, G1260–R1334, D1369–K1438, and G1459–K1529. 2 disordered regions span residues N1535–P1555 and T1605–H1652. Residues N1620–H1652 show a composition bias toward basic and acidic residues. HAT repeat units follow at residues H1651–S1683, A1685–E1722, P1726–T1758, E1759–K1791, G1828–R1860, and G1862–S1897.

As to expression, highly expressed in flowers and at lower levels in roots, leaves, stems and siliques.

The protein localises to the nucleus. It is found in the nucleolus. Its function is as follows. Involved in the biogenesis of ribosomal RNA (rRNA). Required for the formation of 5.8S rRNA. Required for normal development of female gametophytes. In Arabidopsis thaliana (Mouse-ear cress), this protein is rRNA biogenesis protein RRP5.